The chain runs to 149 residues: SsrA-binding protein (149 aa).

The segment at 121 to 149 (GKKQHDKRAAEKDREWQREKQRLVRSAQH) is disordered. Positions 127-142 (KRAAEKDREWQREKQR) are enriched in basic and acidic residues.

Belongs to the SmpB family.

It is found in the cytoplasm. Its function is as follows. Required for rescue of stalled ribosomes mediated by trans-translation. Binds to transfer-messenger RNA (tmRNA), required for stable association of tmRNA with ribosomes. tmRNA and SmpB together mimic tRNA shape, replacing the anticodon stem-loop with SmpB. tmRNA is encoded by the ssrA gene; the 2 termini fold to resemble tRNA(Ala) and it encodes a 'tag peptide', a short internal open reading frame. During trans-translation Ala-aminoacylated tmRNA acts like a tRNA, entering the A-site of stalled ribosomes, displacing the stalled mRNA. The ribosome then switches to translate the ORF on the tmRNA; the nascent peptide is terminated with the 'tag peptide' encoded by the tmRNA and targeted for degradation. The ribosome is freed to recommence translation, which seems to be the essential function of trans-translation. This is SsrA-binding protein from Thiobacillus denitrificans (strain ATCC 25259 / T1).